Here is a 329-residue protein sequence, read N- to C-terminus: 4-hydroxythreonine-4-phosphate dehydrogenase (329 aa).

Substrate is bound by residues H136 and T137. H166, H211, and H266 together coordinate a divalent metal cation. The substrate site is built by K274, N283, and R292.

This sequence belongs to the PdxA family. In terms of assembly, homodimer. It depends on Zn(2+) as a cofactor. Mg(2+) is required as a cofactor. Co(2+) serves as cofactor.

The protein localises to the cytoplasm. It catalyses the reaction 4-(phosphooxy)-L-threonine + NAD(+) = 3-amino-2-oxopropyl phosphate + CO2 + NADH. The protein operates within cofactor biosynthesis; pyridoxine 5'-phosphate biosynthesis; pyridoxine 5'-phosphate from D-erythrose 4-phosphate: step 4/5. Catalyzes the NAD(P)-dependent oxidation of 4-(phosphooxy)-L-threonine (HTP) into 2-amino-3-oxo-4-(phosphooxy)butyric acid which spontaneously decarboxylates to form 3-amino-2-oxopropyl phosphate (AHAP). This chain is 4-hydroxythreonine-4-phosphate dehydrogenase, found in Escherichia fergusonii (strain ATCC 35469 / DSM 13698 / CCUG 18766 / IAM 14443 / JCM 21226 / LMG 7866 / NBRC 102419 / NCTC 12128 / CDC 0568-73).